The primary structure comprises 133 residues: Large ribosomal subunit protein uL11 (133 aa).

It belongs to the universal ribosomal protein uL11 family. As to quaternary structure, part of the ribosomal stalk of the 50S ribosomal subunit. Interacts with L10 and the large rRNA to form the base of the stalk. L10 forms an elongated spine to which 2 L12 dimers bind in a sequential fashion forming a pentameric L10(L12)2(L12)2 complex. One or more lysine residues are methylated.

Forms part of the ribosomal stalk which helps the ribosome interact with GTP-bound translation factors. This is Large ribosomal subunit protein uL11 from Geobacillus stearothermophilus (Bacillus stearothermophilus).